The sequence spans 148 residues: Photosystem I reaction center subunit XI (148 aa).

3 helical membrane-spanning segments follow: residues 48–68, 73–93, and 122–142; these read LEIGLAHGYFLIGPFAQLGPL, IGLLAGFLSTIGLILILTLGL, and GGFFVGACGSAGFAFICLSSI.

This sequence belongs to the PsaL family.

The protein resides in the plastid. The protein localises to the chloroplast thylakoid membrane. In Thalassiosira pseudonana (Marine diatom), this protein is Photosystem I reaction center subunit XI.